The sequence spans 61 residues: Small ribosomal subunit protein uS14 (61 aa).

Residues Cys-24, Cys-27, Cys-40, and Cys-43 each contribute to the Zn(2+) site.

Belongs to the universal ribosomal protein uS14 family. Zinc-binding uS14 subfamily. In terms of assembly, part of the 30S ribosomal subunit. Contacts proteins S3 and S10. Zn(2+) serves as cofactor.

In terms of biological role, binds 16S rRNA, required for the assembly of 30S particles and may also be responsible for determining the conformation of the 16S rRNA at the A site. In Mycoplasma genitalium (strain ATCC 33530 / DSM 19775 / NCTC 10195 / G37) (Mycoplasmoides genitalium), this protein is Small ribosomal subunit protein uS14.